The sequence spans 107 residues: Replication protein A 14 kDa subunit A (107 aa).

M1 carries the N-acetylmethionine modification.

The protein belongs to the replication factor A protein 3 family. In terms of assembly, component of the heterotrimeric canonical replication protein A complex (RPA).

It is found in the nucleus. Its function is as follows. As part of the replication protein A (RPA/RP-A), a single-stranded DNA-binding heterotrimeric complex, may play an essential role in DNA replication, recombination and repair. Binds and stabilizes single-stranded DNA intermediates, preventing complementary DNA reannealing and recruiting different proteins involved in DNA metabolism. The sequence is that of Replication protein A 14 kDa subunit A (RPA3A) from Arabidopsis thaliana (Mouse-ear cress).